The chain runs to 60 residues: Large ribosomal subunit protein bL32 (60 aa).

Basic residues predominate over residues 1-16; the sequence is MPNPKRRHSKKRTSTR. The interval 1–28 is disordered; the sequence is MPNPKRRHSKKRTSTRRAHDALKQPGLS.

Belongs to the bacterial ribosomal protein bL32 family.

This chain is Large ribosomal subunit protein bL32, found in Solibacter usitatus (strain Ellin6076).